Reading from the N-terminus, the 364-residue chain is Paraneoplastic antigen Ma2 homolog (364 aa).

An N-acetylalanine modification is found at Ala2. A compositionally biased stretch (acidic residues) spans 335–353 (EEEEASFENESIEEPEEGD). The interval 335–364 (EEEEASFENESIEEPEEGDGYGRWNHEGDD) is disordered.

It belongs to the PNMA family.

The protein resides in the nucleus. Its subcellular location is the nucleolus. The polypeptide is Paraneoplastic antigen Ma2 homolog (PNMA2) (Pongo abelii (Sumatran orangutan)).